Here is a 533-residue protein sequence, read N- to C-terminus: Glucose-6-phosphate isomerase (533 aa).

Glu341 (proton donor) is an active-site residue. Active-site residues include His372 and Lys501.

This sequence belongs to the GPI family.

It localises to the cytoplasm. The enzyme catalyses alpha-D-glucose 6-phosphate = beta-D-fructose 6-phosphate. Its pathway is carbohydrate biosynthesis; gluconeogenesis. It functions in the pathway carbohydrate degradation; glycolysis; D-glyceraldehyde 3-phosphate and glycerone phosphate from D-glucose: step 2/4. In terms of biological role, catalyzes the reversible isomerization of glucose-6-phosphate to fructose-6-phosphate. This is Glucose-6-phosphate isomerase from Cereibacter sphaeroides (strain ATCC 17025 / ATH 2.4.3) (Rhodobacter sphaeroides).